The sequence spans 288 residues: Rhox homeobox family member 2 (288 aa).

Residues 16–136 (SPAVDDEKEL…GLEPGNAQQP (121 aa)) form a disordered region. The span at 39-48 (VKEEEEDAQP) shows a compositional bias: acidic residues. Residues 68 to 80 (GEEKDGGGEEKDG) show a composition bias toward basic and acidic residues. A DNA-binding region (homeobox) is located at residues 134–193 (QQPNVHAFTPLQLQELERIFQREQFPSEFLRRRLARSMNVTELAVQIWFENRRAKWRRHQ). Positions 186-195 (RAKWRRHQRA) match the Nuclear localization signal motif.

The protein belongs to the paired-like homeobox family. PEPP subfamily. In terms of tissue distribution, testis. Not detected in epididymis nor placenta. In testis, mainly expressed in germ cells, but also detected in somatic cells such as Sertoli cells, Leydig cells and peritubular cells.

The protein resides in the nucleus. Its function is as follows. Transcription factor maybe involved in reproductive processes. Modulates expression of target genes encoding proteins involved in processes relevant to spermatogenesis. The polypeptide is Rhox homeobox family member 2 (Homo sapiens (Human)).